Reading from the N-terminus, the 111-residue chain is uncharacterized protein (111 aa).

The chain crosses the membrane as a helical span at residues 81-101; the sequence is YFFLLFYVSFPHIFLGLFFFI.

It is found in the membrane. This is an uncharacterized protein from Schizosaccharomyces pombe (strain 972 / ATCC 24843) (Fission yeast).